Consider the following 211-residue polypeptide: Superoxide dismutase [Fe] (211 aa).

The Fe cation site is built by His-34, His-85, Asp-171, and His-175.

Belongs to the iron/manganese superoxide dismutase family. It depends on Fe cation as a cofactor.

The enzyme catalyses 2 superoxide + 2 H(+) = H2O2 + O2. Destroys superoxide anion radicals which are normally produced within the cells and which are toxic to biological systems. This chain is Superoxide dismutase [Fe] (sod), found in Acidianus ambivalens (Desulfurolobus ambivalens).